The primary structure comprises 745 residues: Interleukin-17 receptor D (745 aa).

Residues 1-26 (MAGSRRLAHFFMASCLFLCYTASVNG) form the signal peptide. Over 27–298 (GKRGNSDKCS…VHSPWAGPIR (272 aa)) the chain is Extracellular. N-linked (GlcNAc...) asparagine glycans are attached at residues Asn-61, Asn-79, Asn-136, Asn-170, Asn-205, and Asn-276. Residues 299–319 (AMAITVPLVIMSAFATLFTVM) traverse the membrane as a helical segment. The Cytoplasmic segment spans residues 320–745 (CRKKQQENIY…SEGLIAAAST (426 aa)). An SEFIR domain is found at 354-518 (RPKIFICYSS…LMDQLPQLFA (165 aa)). 2 disordered regions span residues 432-454 (RHRKGKATSKEKNREPSASDSSS) and 631-713 (REDL…PPAV). Positions 439 to 448 (TSKEKNREPS) are enriched in basic and acidic residues. Residues 693–705 (SSLADSVSSSSGL) show a composition bias toward low complexity.

Interacts with fgfr1 and fgfr2.

The protein resides in the membrane. Functionally, feedback inhibitor of fibroblast growth factor mediated Ras-MAPK signaling and ERK activation. May inhibit FGF-induced FGFR1 tyrosine phosphorylation. The chain is Interleukin-17 receptor D (il17rd) from Danio rerio (Zebrafish).